Here is a 598-residue protein sequence, read N- to C-terminus: Elongation factor 4 (598 aa).

The region spanning 4 to 181 is the tr-type G domain; it reads KKIRNFAIIA…AIVNLIPPPQ (178 aa). Residues 16 to 21 and 128 to 131 contribute to the GTP site; these read DHGKST and NKID.

The protein belongs to the TRAFAC class translation factor GTPase superfamily. Classic translation factor GTPase family. LepA subfamily.

It is found in the cell membrane. It catalyses the reaction GTP + H2O = GDP + phosphate + H(+). Functionally, required for accurate and efficient protein synthesis under certain stress conditions. May act as a fidelity factor of the translation reaction, by catalyzing a one-codon backward translocation of tRNAs on improperly translocated ribosomes. Back-translocation proceeds from a post-translocation (POST) complex to a pre-translocation (PRE) complex, thus giving elongation factor G a second chance to translocate the tRNAs correctly. Binds to ribosomes in a GTP-dependent manner. This is Elongation factor 4 from Mesomycoplasma hyopneumoniae (strain 7448) (Mycoplasma hyopneumoniae).